The following is a 484-amino-acid chain: Bifunctional protein GlmU (484 aa).

The tract at residues Met1–Arg240 is pyrophosphorylase. Residues Leu12–Gly15, Lys26, Gln79, and Gly84–Thr85 each bind UDP-N-acetyl-alpha-D-glucosamine. Mg(2+) is bound at residue Asp113. UDP-N-acetyl-alpha-D-glucosamine contacts are provided by Gly150, Glu165, Asn180, and Asn238. Residue Asn238 participates in Mg(2+) binding. The interval Val241 to Asp261 is linker. The N-acetyltransferase stretch occupies residues Gly262–Arg484. Residues Arg343 and Lys361 each contribute to the UDP-N-acetyl-alpha-D-glucosamine site. Residue His373 is the Proton acceptor of the active site. Tyr376 and Asn387 together coordinate UDP-N-acetyl-alpha-D-glucosamine. Residues Ala390, Asn396 to Tyr397, Ser415, and Ala433 each bind acetyl-CoA. Residues Glu457–Arg484 form a disordered region. Residues Glu474–Arg484 show a composition bias toward basic and acidic residues.

In the N-terminal section; belongs to the N-acetylglucosamine-1-phosphate uridyltransferase family. It in the C-terminal section; belongs to the transferase hexapeptide repeat family. As to quaternary structure, homotrimer. The cofactor is Mg(2+).

Its subcellular location is the cytoplasm. It carries out the reaction alpha-D-glucosamine 1-phosphate + acetyl-CoA = N-acetyl-alpha-D-glucosamine 1-phosphate + CoA + H(+). The catalysed reaction is N-acetyl-alpha-D-glucosamine 1-phosphate + UTP + H(+) = UDP-N-acetyl-alpha-D-glucosamine + diphosphate. It participates in nucleotide-sugar biosynthesis; UDP-N-acetyl-alpha-D-glucosamine biosynthesis; N-acetyl-alpha-D-glucosamine 1-phosphate from alpha-D-glucosamine 6-phosphate (route II): step 2/2. The protein operates within nucleotide-sugar biosynthesis; UDP-N-acetyl-alpha-D-glucosamine biosynthesis; UDP-N-acetyl-alpha-D-glucosamine from N-acetyl-alpha-D-glucosamine 1-phosphate: step 1/1. Its pathway is bacterial outer membrane biogenesis; LPS lipid A biosynthesis. Its function is as follows. Catalyzes the last two sequential reactions in the de novo biosynthetic pathway for UDP-N-acetylglucosamine (UDP-GlcNAc). The C-terminal domain catalyzes the transfer of acetyl group from acetyl coenzyme A to glucosamine-1-phosphate (GlcN-1-P) to produce N-acetylglucosamine-1-phosphate (GlcNAc-1-P), which is converted into UDP-GlcNAc by the transfer of uridine 5-monophosphate (from uridine 5-triphosphate), a reaction catalyzed by the N-terminal domain. This chain is Bifunctional protein GlmU, found in Thermobifida fusca (strain YX).